Here is a 452-residue protein sequence, read N- to C-terminus: FERM domain-containing protein 8 (452 aa).

The region spanning 28-374 (MDVIIYLIND…YCIELSQSTE (347 aa)) is the FERM domain. Polar residues predominate over residues 373–387 (TESPASDSTPGNSQL). Positions 373–395 (TESPASDSTPGNSQLSEKRSKLK) are disordered.

It is found in the cytoplasm. Its subcellular location is the cytosol. It localises to the cell membrane. In terms of biological role, promotes the cell surface stability of RHBDF1 and RHBDF2 and prevents their degradation via the endolysosomal pathway. By acting on RHBDF proteins, involved in ADAM17-mediated ligand shedding. May negatively regulate Wnt signaling. The sequence is that of FERM domain-containing protein 8 (frmd8) from Xenopus laevis (African clawed frog).